Consider the following 772-residue polypeptide: Carnitine O-palmitoyltransferase 1, muscle isoform (772 aa).

The Cytoplasmic segment spans residues 1 to 47; that stretch reads MAEAHQAVAFQFTVTPDGVDFRLSREALKHVYLSGINSWKKRLIRIK. Residues 48–73 form a helical membrane-spanning segment; it reads NGILRGVYPGSPTSWLVVIMATVGSS. The Mitochondrial intermembrane portion of the chain corresponds to 74 to 102; the sequence is FCNVDISLGLVSCIQRCLPQGCGPYQTPQ. The chain crosses the membrane as a helical span at residues 103-122; the sequence is TRALLSMAIFSTGVWVTGIF. Over 123–772 the chain is Cytoplasmic; the sequence is FFRQTLKLLL…DLFQVPKAYS (650 aa). The Proton acceptor role is filled by His473. 555–567 is a CoA binding site; it reads GKGLIKKCRTSPD. (R)-carnitine contacts are provided by Tyr589 and Thr602.

The protein belongs to the carnitine/choline acetyltransferase family. In terms of tissue distribution, strong expression in heart and skeletal muscle. No expression in liver and kidney.

Its subcellular location is the mitochondrion outer membrane. It carries out the reaction (R)-carnitine + hexadecanoyl-CoA = O-hexadecanoyl-(R)-carnitine + CoA. It participates in lipid metabolism; fatty acid beta-oxidation. Its function is as follows. Catalyzes the transfer of the acyl group of long-chain fatty acid-CoA conjugates onto carnitine, an essential step for the mitochondrial uptake of long-chain fatty acids and their subsequent beta-oxidation in the mitochondrion. This is Carnitine O-palmitoyltransferase 1, muscle isoform (CPT1B) from Homo sapiens (Human).